The primary structure comprises 257 residues: 1-(5-phosphoribosyl)-5-[(5-phosphoribosylamino)methylideneamino] imidazole-4-carboxamide isomerase (257 aa).

The protein belongs to the HisA/HisF family.

It is found in the cytoplasm. The enzyme catalyses 1-(5-phospho-beta-D-ribosyl)-5-[(5-phospho-beta-D-ribosylamino)methylideneamino]imidazole-4-carboxamide = 5-[(5-phospho-1-deoxy-D-ribulos-1-ylimino)methylamino]-1-(5-phospho-beta-D-ribosyl)imidazole-4-carboxamide. Its pathway is amino-acid biosynthesis; L-histidine biosynthesis; L-histidine from 5-phospho-alpha-D-ribose 1-diphosphate: step 4/9. This is 1-(5-phosphoribosyl)-5-[(5-phosphoribosylamino)methylideneamino] imidazole-4-carboxamide isomerase (his-7) from Neurospora crassa (strain ATCC 24698 / 74-OR23-1A / CBS 708.71 / DSM 1257 / FGSC 987).